Consider the following 642-residue polypeptide: Threonine--tRNA ligase (642 aa).

Positions 1–61 constitute a TGS domain; it reads MPVITLPDGS…VDDASVAIIT (61 aa). Residues 243–534 form a catalytic region; sequence DHRKIGKQLD…LTEEYAGFFP (292 aa). The Zn(2+) site is built by Cys334, His385, and His511.

Belongs to the class-II aminoacyl-tRNA synthetase family. In terms of assembly, homodimer. It depends on Zn(2+) as a cofactor.

Its subcellular location is the cytoplasm. It carries out the reaction tRNA(Thr) + L-threonine + ATP = L-threonyl-tRNA(Thr) + AMP + diphosphate + H(+). Catalyzes the attachment of threonine to tRNA(Thr) in a two-step reaction: L-threonine is first activated by ATP to form Thr-AMP and then transferred to the acceptor end of tRNA(Thr). Also edits incorrectly charged L-seryl-tRNA(Thr). This chain is Threonine--tRNA ligase, found in Erwinia tasmaniensis (strain DSM 17950 / CFBP 7177 / CIP 109463 / NCPPB 4357 / Et1/99).